The primary structure comprises 345 residues: UDP-N-acetylenolpyruvoylglucosamine reductase (345 aa).

Residues 16-185 (VNAFAKSVVT…VSVGLRLCKK (170 aa)) enclose the FAD-binding PCMH-type domain. Arg-162 is an active-site residue. Ser-231 functions as the Proton donor in the catalytic mechanism. Glu-328 is an active-site residue.

This sequence belongs to the MurB family. It depends on FAD as a cofactor.

The protein resides in the cytoplasm. The catalysed reaction is UDP-N-acetyl-alpha-D-muramate + NADP(+) = UDP-N-acetyl-3-O-(1-carboxyvinyl)-alpha-D-glucosamine + NADPH + H(+). It participates in cell wall biogenesis; peptidoglycan biosynthesis. In terms of biological role, cell wall formation. The protein is UDP-N-acetylenolpyruvoylglucosamine reductase of Blochmanniella pennsylvanica (strain BPEN).